Consider the following 440-residue polypeptide: tRNA(Ile)-lysidine synthase (440 aa).

An ATP-binding site is contributed by 19–24 (SGGLDS).

The protein belongs to the tRNA(Ile)-lysidine synthase family.

The protein resides in the cytoplasm. It catalyses the reaction cytidine(34) in tRNA(Ile2) + L-lysine + ATP = lysidine(34) in tRNA(Ile2) + AMP + diphosphate + H(+). Ligates lysine onto the cytidine present at position 34 of the AUA codon-specific tRNA(Ile) that contains the anticodon CAU, in an ATP-dependent manner. Cytidine is converted to lysidine, thus changing the amino acid specificity of the tRNA from methionine to isoleucine. The sequence is that of tRNA(Ile)-lysidine synthase from Buchnera aphidicola subsp. Acyrthosiphon pisum (strain APS) (Acyrthosiphon pisum symbiotic bacterium).